Consider the following 248-residue polypeptide: MQRSECSGGVQLRNRATGSNDQRTSSSTQMKHRTTVQRSKSSSLTSSPEAARRARPRPSDKLNPKTINPFGEQPRAPTAFAAIYSQGGIPCRLVHGSVKHRLQWECPPEILPFDPLLITLAEGLRETKHPYTFVSKEGFRELLLVKGAPEKAIPLLPRLIPVLKAALVHSDDEVFERGLSALVQLSVVVGPSLNGHLKLLLTSLSKRLMDKKFKEPITSALQKLEQHGGNASLIIIKSKIPTYCSICC.

Met1 bears the N-acetylmethionine mark. The disordered stretch occupies residues 1–72 (MQRSECSGGV…NPKTINPFGE (72 aa)). Composition is skewed to polar residues over residues 14–29 (NRATGSNDQRTSSSTQ) and 36–45 (VQRSKSSSLT). Residue Ser47 is modified to Phosphoserine.

This Mus musculus (Mouse) protein is PACRG-like protein (Pacrgl).